A 484-amino-acid polypeptide reads, in one-letter code: Trigger factor (484 aa).

The 80-residue stretch at Gly-165–Pro-244 folds into the PPIase FKBP-type domain. A disordered region spans residues Asp-429–Glu-484. The span at Ala-430–Ala-440 shows a compositional bias: acidic residues. A compositionally biased stretch (basic and acidic residues) spans Lys-475–Glu-484.

Belongs to the FKBP-type PPIase family. Tig subfamily.

It localises to the cytoplasm. It catalyses the reaction [protein]-peptidylproline (omega=180) = [protein]-peptidylproline (omega=0). Functionally, involved in protein export. Acts as a chaperone by maintaining the newly synthesized protein in an open conformation. Functions as a peptidyl-prolyl cis-trans isomerase. This is Trigger factor from Clavibacter michiganensis subsp. michiganensis (strain NCPPB 382).